The chain runs to 326 residues: Beta-ketoacyl-[acyl-carrier-protein] synthase III (326 aa).

Residues Cys-116 and His-253 contribute to the active site. Residues 254-258 form an ACP-binding region; it reads QANIR. Asn-283 is a catalytic residue.

This sequence belongs to the thiolase-like superfamily. FabH family. Homodimer.

The protein resides in the cytoplasm. The enzyme catalyses malonyl-[ACP] + acetyl-CoA + H(+) = 3-oxobutanoyl-[ACP] + CO2 + CoA. It participates in lipid metabolism; fatty acid biosynthesis. Functionally, catalyzes the condensation reaction of fatty acid synthesis by the addition to an acyl acceptor of two carbons from malonyl-ACP. Catalyzes the first condensation reaction which initiates fatty acid synthesis and may therefore play a role in governing the total rate of fatty acid production. Possesses both acetoacetyl-ACP synthase and acetyl transacylase activities. Its substrate specificity determines the biosynthesis of branched-chain and/or straight-chain of fatty acids. This is Beta-ketoacyl-[acyl-carrier-protein] synthase III from Jannaschia sp. (strain CCS1).